Reading from the N-terminus, the 81-residue chain is Large ribosomal subunit protein bL31B (81 aa).

It belongs to the bacterial ribosomal protein bL31 family. Type B subfamily. In terms of assembly, part of the 50S ribosomal subunit.

The chain is Large ribosomal subunit protein bL31B from Lactobacillus helveticus (strain DPC 4571).